We begin with the raw amino-acid sequence, 565 residues long: NAD-dependent malic enzyme (565 aa).

Tyr-104 serves as the catalytic Proton donor. Position 157 (Arg-157) interacts with NAD(+). Catalysis depends on Lys-175, which acts as the Proton acceptor. A divalent metal cation-binding residues include Glu-246, Asp-247, and Asp-270. NAD(+) is bound by residues Asp-270 and Asn-418.

Belongs to the malic enzymes family. Homotetramer. Requires Mg(2+) as cofactor. The cofactor is Mn(2+).

The enzyme catalyses (S)-malate + NAD(+) = pyruvate + CO2 + NADH. The catalysed reaction is oxaloacetate + H(+) = pyruvate + CO2. The chain is NAD-dependent malic enzyme from Sodalis glossinidius (strain morsitans).